A 476-amino-acid polypeptide reads, in one-letter code: Glycogen synthase (476 aa).

Residue lysine 15 coordinates ADP-alpha-D-glucose.

It belongs to the glycosyltransferase 1 family. Bacterial/plant glycogen synthase subfamily.

The catalysed reaction is [(1-&gt;4)-alpha-D-glucosyl](n) + ADP-alpha-D-glucose = [(1-&gt;4)-alpha-D-glucosyl](n+1) + ADP + H(+). It functions in the pathway glycan biosynthesis; glycogen biosynthesis. Functionally, synthesizes alpha-1,4-glucan chains using ADP-glucose. The chain is Glycogen synthase from Yersinia pseudotuberculosis serotype IB (strain PB1/+).